We begin with the raw amino-acid sequence, 593 residues long: A-type ATP synthase subunit A (593 aa).

236 to 243 (GPFGSGKT) is an ATP binding site.

Belongs to the ATPase alpha/beta chains family. As to quaternary structure, has multiple subunits with at least A(3), B(3), C, D, E, F, H, I and proteolipid K(x).

It is found in the cell membrane. The catalysed reaction is ATP + H2O + 4 H(+)(in) = ADP + phosphate + 5 H(+)(out). In terms of biological role, component of the A-type ATP synthase that produces ATP from ADP in the presence of a proton gradient across the membrane. The A chain is the catalytic subunit. In Pyrobaculum arsenaticum (strain DSM 13514 / JCM 11321 / PZ6), this protein is A-type ATP synthase subunit A.